We begin with the raw amino-acid sequence, 623 residues long: Kelch repeat and BTB domain-containing protein 2 (623 aa).

A BTB domain is found at 31–98 (TDIVLIVEGT…AYTGNLAMND (68 aa)). One can recognise a BACK domain in the interval 133–229 (CVRLLSFADL…IRIDALSEVT (97 aa)). A Phosphoserine modification is found at S300. Kelch repeat units lie at residues 317–380 (DIYI…CCEG), 381–429 (YIYA…VVHD), 431–469 (IYVM…AFGD), 470–529 (KIFY…RAVV), and 535–581 (CVFM…DFRC).

As to quaternary structure, component of the BCR(KBTBD2) E3 ubiquitin ligase complex, at least composed of CUL3, KBTBD2 and RBX1. Interacts (via the BTB domain) with CUL3.

Its pathway is protein modification; protein ubiquitination. Functionally, substrate-specific adapter of a BCR (BTB-CUL3-RBX1) E3 ubiquitin ligase complex that acts as a regulator of the insulin signaling pathway, modulating insulin sensitivity by limiting PIK3R1/p85alpha abundance in adipocytes. Targets PIK3R1, the regulatory subunit of phosphatidylinositol 3-kinase (PI3K), for 'Lys-48'-linked polyubiquitination and proteasome-mediated degradation. The protein is Kelch repeat and BTB domain-containing protein 2 of Homo sapiens (Human).